We begin with the raw amino-acid sequence, 370 residues long: Holliday junction branch migration complex subunit RuvB 2 (370 aa).

A disordered region spans residues 1–54 (MAIISSRAAGAEDPGQRQQKSSARRRESKLAFARAEGLLQPQAHPSEAQEESLR). The interval 13-214 (DPGQRQQKSS…FGQVQRLRFY (202 aa)) is large ATPase domain (RuvB-L). Residues Leu53, Arg54, Gly95, Lys98, Thr99, Thr100, 161-163 (EDF), Arg204, Tyr214, and Arg251 each bind ATP. Residue Thr99 coordinates Mg(2+). The tract at residues 215–285 (EPHELAEIVL…VAAAALELFQ (71 aa)) is small ATPAse domain (RuvB-S). Positions 288-370 (PMGLDWTDRK…TAQSPLPVWS (83 aa)) are head domain (RuvB-H). DNA contacts are provided by Arg343 and Arg348.

Belongs to the RuvB family. In terms of assembly, homohexamer. Forms an RuvA(8)-RuvB(12)-Holliday junction (HJ) complex. HJ DNA is sandwiched between 2 RuvA tetramers; dsDNA enters through RuvA and exits via RuvB. An RuvB hexamer assembles on each DNA strand where it exits the tetramer. Each RuvB hexamer is contacted by two RuvA subunits (via domain III) on 2 adjacent RuvB subunits; this complex drives branch migration. In the full resolvosome a probable DNA-RuvA(4)-RuvB(12)-RuvC(2) complex forms which resolves the HJ.

Its subcellular location is the cytoplasm. The enzyme catalyses ATP + H2O = ADP + phosphate + H(+). Its function is as follows. The RuvA-RuvB-RuvC complex processes Holliday junction (HJ) DNA during genetic recombination and DNA repair, while the RuvA-RuvB complex plays an important role in the rescue of blocked DNA replication forks via replication fork reversal (RFR). RuvA specifically binds to HJ cruciform DNA, conferring on it an open structure. The RuvB hexamer acts as an ATP-dependent pump, pulling dsDNA into and through the RuvAB complex. RuvB forms 2 homohexamers on either side of HJ DNA bound by 1 or 2 RuvA tetramers; 4 subunits per hexamer contact DNA at a time. Coordinated motions by a converter formed by DNA-disengaged RuvB subunits stimulates ATP hydrolysis and nucleotide exchange. Immobilization of the converter enables RuvB to convert the ATP-contained energy into a lever motion, pulling 2 nucleotides of DNA out of the RuvA tetramer per ATP hydrolyzed, thus driving DNA branch migration. The RuvB motors rotate together with the DNA substrate, which together with the progressing nucleotide cycle form the mechanistic basis for DNA recombination by continuous HJ branch migration. Branch migration allows RuvC to scan DNA until it finds its consensus sequence, where it cleaves and resolves cruciform DNA. The polypeptide is Holliday junction branch migration complex subunit RuvB 2 (Synechococcus sp. (strain JA-3-3Ab) (Cyanobacteria bacterium Yellowstone A-Prime)).